A 290-amino-acid chain; its full sequence is Probable 2-(5''-triphosphoribosyl)-3'-dephosphocoenzyme-A synthase (290 aa).

This sequence belongs to the CitG/MdcB family.

The enzyme catalyses 3'-dephospho-CoA + ATP = 2'-(5''-triphospho-alpha-D-ribosyl)-3'-dephospho-CoA + adenine. Its function is as follows. Involved in the formation of 2-(5''-phosphoribosyl)-3'-dephosphocoenzyme-A, the prosthetic group of the acyl-carrier protein of the malonate decarboxylase. The sequence is that of Probable 2-(5''-triphosphoribosyl)-3'-dephosphocoenzyme-A synthase from Stutzerimonas stutzeri (strain A1501) (Pseudomonas stutzeri).